A 1131-amino-acid polypeptide reads, in one-letter code: Plasma membrane ATPase (1131 aa).

The next 6 helical transmembrane spans lie at 77–97 (PVLV…EAAA), 98–118 (IISI…LLLI), 151–171 (GAIV…LIRL), 231–251 (AVVY…LISG), 265–285 (MSAI…AVQF), and 305–325 (MLVV…SVTL). Aspartate 357 serves as the catalytic 4-aspartylphosphate intermediate. Positions 615 and 619 each coordinate Mg(2+). 5 consecutive transmembrane segments (helical) span residues 642 to 662 (AADI…VIGA), 689 to 709 (LITV…MAVF), 733 to 753 (ITNI…STWA), 884 to 904 (LAFF…LGGF), and 946 to 966 (VIGC…WYVL). Over residues 994-1010 (KRSLDRRSKDDIGDKEF) the composition is skewed to basic and acidic residues. Disordered stretches follow at residues 994-1023 (KRSL…NYSN) and 1067-1131 (RRSM…TIRE). A compositionally biased stretch (polar residues) spans 1089 to 1100 (SRTSNTLSTGSK). Basic and acidic residues predominate over residues 1118–1131 (IKPDKYDFASTIRE).

This sequence belongs to the cation transport ATPase (P-type) (TC 3.A.3) family. Type IIIA subfamily.

The protein localises to the cell membrane. The enzyme catalyses ATP + H2O + H(+)(in) = ADP + phosphate + 2 H(+)(out). In terms of biological role, the plasma membrane ATPase of plants and fungi is a hydrogen ion pump. The proton gradient it generates drives the active transport of nutrients by H(+)-symport. The resulting external acidification and/or internal alkinization may mediate growth responses. In Dunaliella bioculata (Green alga), this protein is Plasma membrane ATPase (PMA1).